A 438-amino-acid chain; its full sequence is Histidine--tRNA ligase (438 aa).

It belongs to the class-II aminoacyl-tRNA synthetase family. In terms of assembly, homodimer.

Its subcellular location is the cytoplasm. The enzyme catalyses tRNA(His) + L-histidine + ATP = L-histidyl-tRNA(His) + AMP + diphosphate + H(+). In Thermobifida fusca (strain YX), this protein is Histidine--tRNA ligase (hisS).